The primary structure comprises 343 residues: DNA polymerase III subunit delta (343 aa).

Domain stretches follow at residues 1 to 140 (MIRL…VTCQ), 141 to 210 (TPEQ…NDAA), and 211 to 343 (HFTP…FIDG).

The protein belongs to the DNA polymerase HolA subunit family. As to quaternary structure, the DNA polymerase III holoenzyme complex contains at least 10 different subunits organized into 3 functionally essential subassemblies: the Pol III core, the beta sliding clamp processivity factor and the clamp-loading complex. The Pol III core (subunits alpha, epsilon and theta) contains the polymerase and the 3'-5' exonuclease proofreading activities. The polymerase is tethered to the template via the dimeric beta sliding clamp processivity factor. The clamp-loading complex (also called gamma complex) assembles the beta sliding clamp onto the primed template and plays a central role in the organization and communication at the replication fork. The clamp-loading complex contains delta, delta', psi and chi, and 3 copies of either or both of two different DnaX proteins, gamma and tau. The DNA replisome complex has a single clamp loader (3 tau and 1 each of delta, delta', psi and chi subunits) which binds 3 Pol III cores (1 core on the leading strand and 2 on the lagging strand) each with a beta sliding clamp dimer. Additional proteins in the replisome are other copies of gamma, psi and chi, Ssb, DNA helicase and RNA primase. The clamp loader hydrolyzes ATP to assemble the beta processivity factor onto the primed template and plays a central role in the organization and communication at the replication fork; the minimal complex to load the beta sliding clamp on DNA is delta, delta', gamma.

The catalysed reaction is DNA(n) + a 2'-deoxyribonucleoside 5'-triphosphate = DNA(n+1) + diphosphate. Functionally, part of the beta sliding clamp loading complex, which hydrolyzes ATP to load the beta clamp onto primed DNA to form the DNA replication pre-initiation complex. DNA polymerase III is a complex, multichain enzyme responsible for most of the replicative synthesis in bacteria. This DNA polymerase also exhibits 3'-5' exonuclease activity. The delta subunit is the wrench that will open the beta subunit dimer, which has been modeled to leave a gap large enough for ssDNA to pass through. The gamma complex (gamma(3),delta,delta') is thought to load beta dimers onto DNA by binding ATP which alters the complex's conformation so it can bind beta sliding clamp dimers and open them at one interface. Primed DNA is recognized, ATP is hydrolyzed releasing the gamma complex and closing the beta sliding clamp ring around the primed DNA. This Escherichia coli (strain K12) protein is DNA polymerase III subunit delta (holA).